A 274-amino-acid chain; its full sequence is Rhamnulose-1-phosphate aldolase (274 aa).

E117 is a catalytic residue. Zn(2+) contacts are provided by H141, H143, and H212.

Belongs to the aldolase class II family. RhaD subfamily. As to quaternary structure, homotetramer. Requires Zn(2+) as cofactor.

The protein resides in the cytoplasm. It catalyses the reaction L-rhamnulose 1-phosphate = (S)-lactaldehyde + dihydroxyacetone phosphate. It functions in the pathway carbohydrate degradation; L-rhamnose degradation; glycerone phosphate from L-rhamnose: step 3/3. In terms of biological role, catalyzes the reversible cleavage of L-rhamnulose-1-phosphate to dihydroxyacetone phosphate (DHAP) and L-lactaldehyde. The sequence is that of Rhamnulose-1-phosphate aldolase from Escherichia coli O6:H1 (strain CFT073 / ATCC 700928 / UPEC).